The chain runs to 277 residues: Carbonyl reductase [NADPH] 1 (277 aa).

NADP(+) is bound by residues 10 to 34, 63 to 64, and Asn90; these read VTGA…GDVL and DI. Ser30 bears the Phosphoserine mark. Glutathione-binding positions include 95–97 and Gln106; that span reads FKM. Ser140 is a binding site for substrate. Glutathione is bound at residue 193–194; sequence AY. The Proton acceptor role is filled by Tyr194. NADP(+) is bound by residues 194-198 and 231-233; these read YGVTK and VRT.

This sequence belongs to the short-chain dehydrogenases/reductases (SDR) family. As to quaternary structure, monomer. In terms of tissue distribution, present in liver and kidney.

It is found in the cytoplasm. It catalyses the reaction a secondary alcohol + NADP(+) = a ketone + NADPH + H(+). The catalysed reaction is prostaglandin F2alpha + NADP(+) = prostaglandin E2 + NADPH + H(+). The enzyme catalyses prostaglandin E1 + NADP(+) = 15-oxoprostaglandin E1 + NADPH + H(+). It carries out the reaction menadione + NADPH + H(+) = menadiol + NADP(+). It catalyses the reaction prostaglandin D2 + NADP(+) = 15-oxoprostaglandin D2 + NADPH + H(+). The catalysed reaction is prostaglandin E2 + NADP(+) = 15-oxoprostaglandin E2 + NADPH + H(+). The enzyme catalyses prostaglandin F2alpha + NADP(+) = 15-oxoprostaglandin F2alpha + NADPH + H(+). It carries out the reaction daunorubicin + NADPH + H(+) = 13-dihydrodaunorubicin + NADP(+). It catalyses the reaction S-nitrosoglutathione + NADPH + H(+) = S-(hydroxysulfenamide)glutathione + NADP(+). The catalysed reaction is a primary alcohol + NADP(+) = an aldehyde + NADPH + H(+). The enzyme catalyses cortisol + NADPH + H(+) = 20beta-dihydrocortisol + NADP(+). It carries out the reaction corticosterone + NADPH + H(+) = 20beta-dihydrocorticosterone + NADP(+). Functionally, NADPH-dependent reductase with broad substrate specificity. Catalyzes the reduction of a wide variety of carbonyl compounds including quinones, prostaglandins, menadione, plus various xenobiotics. Catalyzes the reduction of the antitumor anthracyclines doxorubicin and daunorubicin to the cardiotoxic compounds doxorubicinol and daunorubicinol. Can convert prostaglandin E to prostaglandin F2-alpha. Can bind glutathione, which explains its higher affinity for glutathione-conjugated substrates. Catalyzes the reduction of S-nitrosoglutathione. In addition, participates in the glucocorticoid metabolism by catalyzing the NADPH-dependent cortisol/corticosterone into 20beta-dihydrocortisol (20b-DHF) or 20beta-corticosterone (20b-DHB), which are weak agonists of NR3C1 and NR3C2 in adipose tissue. The protein is Carbonyl reductase [NADPH] 1 of Oryctolagus cuniculus (Rabbit).